The chain runs to 403 residues: Imidazolonepropionase (403 aa).

2 residues coordinate Fe(3+): His-68 and His-70. His-68 and His-70 together coordinate Zn(2+). Positions 77, 140, and 173 each coordinate 4-imidazolone-5-propanoate. Tyr-140 is an N-formimidoyl-L-glutamate binding site. Residue His-238 coordinates Fe(3+). Residue His-238 coordinates Zn(2+). Residue Gln-241 participates in 4-imidazolone-5-propanoate binding. Asp-313 serves as a coordination point for Fe(3+). Asp-313 provides a ligand contact to Zn(2+). Positions 315 and 317 each coordinate N-formimidoyl-L-glutamate. Thr-318 is a binding site for 4-imidazolone-5-propanoate.

It belongs to the metallo-dependent hydrolases superfamily. HutI family. The cofactor is Zn(2+). Requires Fe(3+) as cofactor.

It is found in the cytoplasm. It carries out the reaction 4-imidazolone-5-propanoate + H2O = N-formimidoyl-L-glutamate. The protein operates within amino-acid degradation; L-histidine degradation into L-glutamate; N-formimidoyl-L-glutamate from L-histidine: step 3/3. In terms of biological role, catalyzes the hydrolytic cleavage of the carbon-nitrogen bond in imidazolone-5-propanoate to yield N-formimidoyl-L-glutamate. It is the third step in the universal histidine degradation pathway. The protein is Imidazolonepropionase of Psychromonas ingrahamii (strain DSM 17664 / CCUG 51855 / 37).